The primary structure comprises 940 residues: Alanine--tRNA ligase (940 aa).

Residues His581, His585, Cys683, and His687 each contribute to the Zn(2+) site.

The protein belongs to the class-II aminoacyl-tRNA synthetase family. It depends on Zn(2+) as a cofactor.

The protein resides in the cytoplasm. The enzyme catalyses tRNA(Ala) + L-alanine + ATP = L-alanyl-tRNA(Ala) + AMP + diphosphate. Catalyzes the attachment of alanine to tRNA(Ala) in a two-step reaction: alanine is first activated by ATP to form Ala-AMP and then transferred to the acceptor end of tRNA(Ala). Also edits incorrectly charged Ser-tRNA(Ala) and Gly-tRNA(Ala) via its editing domain. The polypeptide is Alanine--tRNA ligase (Leptospira borgpetersenii serovar Hardjo-bovis (strain L550)).